Here is a 165-residue protein sequence, read N- to C-terminus: Phosphopantetheine adenylyltransferase (165 aa).

A substrate-binding site is contributed by Ser-9. Residues 9 to 10 and His-17 each bind ATP; that span reads SF. Substrate is bound by residues Lys-41, Leu-73, and Lys-87. Residues 88–90, Glu-98, and 122–128 contribute to the ATP site; these read GLR and YSFLSSS.

Belongs to the bacterial CoaD family. As to quaternary structure, homohexamer. Mg(2+) is required as a cofactor.

The protein resides in the cytoplasm. The enzyme catalyses (R)-4'-phosphopantetheine + ATP + H(+) = 3'-dephospho-CoA + diphosphate. The protein operates within cofactor biosynthesis; coenzyme A biosynthesis; CoA from (R)-pantothenate: step 4/5. In terms of biological role, reversibly transfers an adenylyl group from ATP to 4'-phosphopantetheine, yielding dephospho-CoA (dPCoA) and pyrophosphate. This Acidothermus cellulolyticus (strain ATCC 43068 / DSM 8971 / 11B) protein is Phosphopantetheine adenylyltransferase.